Consider the following 321-residue polypeptide: Fructose-1,6-bisphosphatase class 1 (321 aa).

Mg(2+) contacts are provided by Glu93, Asp114, Leu116, and Asp117. Residues 117-120 (DGSS), Asn205, Tyr233, and Lys263 each bind substrate. Residue Glu269 coordinates Mg(2+).

Belongs to the FBPase class 1 family. In terms of assembly, homotetramer. Mg(2+) serves as cofactor.

It is found in the cytoplasm. The enzyme catalyses beta-D-fructose 1,6-bisphosphate + H2O = beta-D-fructose 6-phosphate + phosphate. It participates in carbohydrate biosynthesis; gluconeogenesis. This Persephonella marina (strain DSM 14350 / EX-H1) protein is Fructose-1,6-bisphosphatase class 1.